A 443-amino-acid polypeptide reads, in one-letter code: Glutamate-rich protein 1 (443 aa).

The residue at position 12 (Lys12) is an N6-acetyllysine. Residues 15-333 form a disordered region; it reads QRLFPPVPSG…DASEEDDTIT (319 aa). Over residues 42-54 the composition is skewed to basic and acidic residues; sequence VTSEKVSQKHAEP. Residues 87–97 are compositionally biased toward polar residues; that stretch reads SCGSPENASSG. Basic residues-rich tracts occupy residues 109–124 and 159–176; these read PKRR…KKFK and KNKK…RKKA. The span at 205-226 shows a compositional bias: acidic residues; it reads ACEEDGVDTSEEDPTLAGEEDV. A phosphoserine mark is found at Ser238 and Ser254. Residues 250-266 are compositionally biased toward acidic residues; the sequence is GADASEEDPTPAGEEDV. Thr277 is modified (phosphothreonine). The span at 281-296 shows a compositional bias: basic and acidic residues; the sequence is DLTRAGEEDGKDTREE. Positions 297 to 332 are enriched in acidic residues; sequence DGADASEEDPTWAGEEEGADSGEEDGADASEEDDTI.

This chain is Glutamate-rich protein 1 (ERICH1), found in Homo sapiens (Human).